Here is a 522-residue protein sequence, read N- to C-terminus: ATP synthase subunit alpha, mitochondrial (522 aa).

An ATP-binding site is contributed by 172–179 (GDRQTGKT).

This sequence belongs to the ATPase alpha/beta chains family. F-type ATPases have 2 components, CF(1) - the catalytic core - and CF(0) - the membrane proton channel. CF(1) has five subunits: alpha(3), beta(3), gamma(1), delta(1), epsilon(1). CF(0) has three main subunits: a, b and c.

The protein resides in the mitochondrion. It localises to the mitochondrion inner membrane. In terms of biological role, mitochondrial membrane ATP synthase (F(1)F(0) ATP synthase or Complex V) produces ATP from ADP in the presence of a proton gradient across the membrane which is generated by electron transport complexes of the respiratory chain. F-type ATPases consist of two structural domains, F(1) - containing the extramembraneous catalytic core, and F(0) - containing the membrane proton channel, linked together by a central stalk and a peripheral stalk. During catalysis, ATP synthesis in the catalytic domain of F(1) is coupled via a rotary mechanism of the central stalk subunits to proton translocation. Subunits alpha and beta form the catalytic core in F(1). Rotation of the central stalk against the surrounding alpha(3)beta(3) subunits leads to hydrolysis of ATP in three separate catalytic sites on the beta subunits. Subunit alpha does not bear the catalytic high-affinity ATP-binding sites. The sequence is that of ATP synthase subunit alpha, mitochondrial (ATP1) from Acanthamoeba castellanii (Amoeba).